We begin with the raw amino-acid sequence, 691 residues long: DNA ligase (691 aa).

A disordered region spans residues 1-22; the sequence is MTTAEDVAGNPYISDPRTDFES. Residues 59-63, 107-108, and glutamate 137 each bind NAD(+); these read DRAYD and SI. The active-site N6-AMP-lysine intermediate is the lysine 139. Arginine 160, glutamate 196, lysine 311, and lysine 335 together coordinate NAD(+). Zn(2+) contacts are provided by cysteine 426, cysteine 429, cysteine 442, and cysteine 448. Residues 608-691 enclose the BRCT domain; it reads TDGDALDGQT…EELLDDAGVL (84 aa). The disordered stretch occupies residues 637-667; the sequence is ERNDGSATSSVSGNTDYLVLGDNPGQRKQDD. Polar residues predominate over residues 641-651; sequence GSATSSVSGNT.

It belongs to the NAD-dependent DNA ligase family. LigA subfamily. Requires Mg(2+) as cofactor. The cofactor is Mn(2+).

The enzyme catalyses NAD(+) + (deoxyribonucleotide)n-3'-hydroxyl + 5'-phospho-(deoxyribonucleotide)m = (deoxyribonucleotide)n+m + AMP + beta-nicotinamide D-nucleotide.. Its function is as follows. DNA ligase that catalyzes the formation of phosphodiester linkages between 5'-phosphoryl and 3'-hydroxyl groups in double-stranded DNA using NAD as a coenzyme and as the energy source for the reaction. It is essential for DNA replication and repair of damaged DNA. This is DNA ligase from Haloarcula marismortui (strain ATCC 43049 / DSM 3752 / JCM 8966 / VKM B-1809) (Halobacterium marismortui).